Here is a 458-residue protein sequence, read N- to C-terminus: UDP-N-acetylmuramate--L-alanine ligase (458 aa).

118–124 (GTHGKTT) is an ATP binding site.

The protein belongs to the MurCDEF family.

The protein localises to the cytoplasm. The catalysed reaction is UDP-N-acetyl-alpha-D-muramate + L-alanine + ATP = UDP-N-acetyl-alpha-D-muramoyl-L-alanine + ADP + phosphate + H(+). Its pathway is cell wall biogenesis; peptidoglycan biosynthesis. Cell wall formation. The protein is UDP-N-acetylmuramate--L-alanine ligase of Clostridium botulinum (strain Loch Maree / Type A3).